The primary structure comprises 198 residues: Glycerol-3-phosphate acyltransferase (198 aa).

Helical transmembrane passes span 6–26 (FLPV…GLIL), 55–75 (GLAA…VIIS), 83–103 (AAMI…WLKF), 113–133 (IGIL…VWLA), and 154–174 (IVLW…LTLL).

The protein belongs to the PlsY family. Probably interacts with PlsX.

The protein resides in the cell inner membrane. It catalyses the reaction an acyl phosphate + sn-glycerol 3-phosphate = a 1-acyl-sn-glycero-3-phosphate + phosphate. It functions in the pathway lipid metabolism; phospholipid metabolism. In terms of biological role, catalyzes the transfer of an acyl group from acyl-phosphate (acyl-PO(4)) to glycerol-3-phosphate (G3P) to form lysophosphatidic acid (LPA). This enzyme utilizes acyl-phosphate as fatty acyl donor, but not acyl-CoA or acyl-ACP. In Bradyrhizobium sp. (strain BTAi1 / ATCC BAA-1182), this protein is Glycerol-3-phosphate acyltransferase.